The primary structure comprises 82 residues: Exodeoxyribonuclease 7 small subunit (82 aa).

The protein belongs to the XseB family. Heterooligomer composed of large and small subunits.

The protein localises to the cytoplasm. The catalysed reaction is Exonucleolytic cleavage in either 5'- to 3'- or 3'- to 5'-direction to yield nucleoside 5'-phosphates.. Its function is as follows. Bidirectionally degrades single-stranded DNA into large acid-insoluble oligonucleotides, which are then degraded further into small acid-soluble oligonucleotides. In Mycobacterium marinum (strain ATCC BAA-535 / M), this protein is Exodeoxyribonuclease 7 small subunit.